We begin with the raw amino-acid sequence, 519 residues long: Laccase-2 (519 aa).

An N-terminal signal peptide occupies residues 1-20 (MGLQRFSFFVTLALVARSLA). Plastocyanin-like domains follow at residues 22 to 147 (IGPV…FVVY) and 159 to 301 (VDNE…ILRY). Residue Asn-74 is glycosylated (N-linked (GlcNAc...) asparagine). His-84, His-86, His-129, and His-131 together coordinate Cu cation. 2 disulfides stabilise this stretch: Cys-105/Cys-508 and Cys-137/Cys-225. 6 N-linked (GlcNAc...) asparagine glycosylation sites follow: Asn-161, Asn-228, Asn-237, Asn-271, Asn-353, and Asn-361. A Plastocyanin-like 3 domain is found at 368–490 (TVPVLLQILS…AGFAIVFAED (123 aa)). Cu cation is bound by residues His-415, His-418, His-420, His-472, Cys-473, His-474, and His-478.

The protein belongs to the multicopper oxidase family. Homodimer. Requires Cu cation as cofactor.

The protein localises to the secreted. It carries out the reaction 4 hydroquinone + O2 = 4 benzosemiquinone + 2 H2O. Functionally, lignin degradation and detoxification of lignin-derived products. In Trametes villosa (White-rot fungus), this protein is Laccase-2.